Consider the following 971-residue polypeptide: Endoplasmic reticulum calcium ATPase srcA (971 aa).

Residues 1–25 (MNNEALAEDPPTPLWELVLEQFKDQ) are Cytoplasmic-facing. A helical transmembrane segment spans residues 26-46 (LVLILLGSAAVSFVLALFEEG). Residues 47 to 49 (DDW) are Lumenal-facing. A helical transmembrane segment spans residues 50–70 (TAFVDPVVILTILILNAVVGV). Residues 71–217 (TQESSAEKAI…PTPLKQKLND (147 aa)) lie on the Cytoplasmic side of the membrane. Residues 218–238 (FGDMLAKVITVICVLVWLINV) form a helical membrane-spanning segment. Residues 239–262 (EHFNDPAHGGWAKGAIYYLKIAVS) lie on the Lumenal side of the membrane. The helical transmembrane segment at 263-283 (LGVAAIPEGLAVVITTCLALG) threads the bilayer. Ca(2+) contacts are provided by Val-265, Ala-266, Ile-268, and Glu-270. At 284 to 718 (TRKMAAKNAV…GRSIYSNTQQ (435 aa)) the chain is on the cytoplasmic side. Residue Asp-312 is the 4-aspartylphosphate intermediate of the active site. The Mg(2+) site is built by Asp-312 and Thr-314. 7 residues coordinate ATP: Thr-314, Glu-402, Arg-453, Lys-473, Arg-518, Arg-637, and Lys-643. Asp-662 contacts Mg(2+). An ATP-binding site is contributed by Asn-665. The chain crosses the membrane as a helical span at residues 719-741 (FIRYLISSNIGEVVSIFLTAALG). Asn-727 and Glu-730 together coordinate Ca(2+). Residues 742-750 (MPEALIPVQ) are Lumenal-facing. Residues 751 to 770 (LLWVNLVTDGLPATALSFNP) traverse the membrane as a helical segment. Positions 755, 758, and 759 each coordinate Ca(2+). At 771 to 795 (PDHDVMRRAPRKRDEPLVGGWLLFR) the chain is on the cytoplasmic side. The helical transmembrane segment at 796–816 (YLAIGTYVGAATVFGYIWWFV) threads the bilayer. The Lumenal segment spans residues 817-854 (YNPEGPQISFWQLSHFHKCSAQFPEIGCEMFSNEMSRS). The helical transmembrane segment at 855-875 (ASTVSLSILVVIEMLNAMNAL) threads the bilayer. Position 867 (Glu-867) interacts with Ca(2+). The Cytoplasmic segment spans residues 876–891 (SSSESLLAFPLWNNMM). A helical membrane pass occupies residues 892–912 (LVYAIILSMTLHFAILYIPFL). Over 913 to 917 (QTLFS) the chain is Lumenal. The chain crosses the membrane as a helical span at residues 918 to 938 (ILPLNWTEWKAVLAISAPVVA). At 939–971 (IDELLKYAERRLYTLPAIAGEQQNGVAFKPKKA) the chain is on the cytoplasmic side.

It belongs to the cation transport ATPase (P-type) (TC 3.A.3) family. It depends on Mg(2+) as a cofactor.

The protein resides in the endoplasmic reticulum membrane. The enzyme catalyses Ca(2+)(in) + ATP + H2O = Ca(2+)(out) + ADP + phosphate + H(+). Magnesium-dependent enzyme catalyzes the hydrolysis of ATP coupled with the translocation of calcium from the cytosol to the endoplasmic reticulum lumen. Its activity is coupled to the unfolded protein response (UPR) and Ca(2+) import into the endoplasmioc reticulum is important for redox homeostasis, virulence, cell wall biosynthesis, and resistance to antifungal compounds that inhibit Ca2+ signaling. With pmrA, promotes radial growth and conidiation. This chain is Endoplasmic reticulum calcium ATPase srcA (srcA), found in Aspergillus fumigatus (strain ATCC MYA-4609 / CBS 101355 / FGSC A1100 / Af293) (Neosartorya fumigata).